A 1253-amino-acid chain; its full sequence is Cytoplasmic FMR1-interacting protein 2 (1253 aa).

It belongs to the CYFIP family.

Its subcellular location is the cytoplasm. Its function is as follows. Involved in T-cell adhesion and p53-dependent induction of apoptosis. Does not bind RNA. This is Cytoplasmic FMR1-interacting protein 2 (cyfip2) from Xenopus laevis (African clawed frog).